Reading from the N-terminus, the 181-residue chain is Cytidylate kinase (181 aa).

Position 12–20 (12–20 (GLAGSGTTT)) interacts with ATP.

The protein belongs to the cytidylate kinase family. Type 2 subfamily.

It localises to the cytoplasm. It carries out the reaction CMP + ATP = CDP + ADP. It catalyses the reaction dCMP + ATP = dCDP + ADP. The polypeptide is Cytidylate kinase (cmk) (Pyrococcus abyssi (strain GE5 / Orsay)).